A 71-amino-acid chain; its full sequence is Serine palmitoyltransferase small subunit A (71 aa).

Topologically, residues 1–12 (MAGMALARAWKQ) are cytoplasmic. Residues 13–29 (MSWFYYQYLLVTALYML) traverse the membrane as a helical segment. The Lumenal portion of the chain corresponds to 30–34 (EPWER). Residues 35–57 (TVFNSMLVSVVGMALYTGYVFMP) traverse the membrane as a helical segment. At 58–71 (QHIMAILHYFEIVQ) the chain is on the cytoplasmic side.

It belongs to the SPTSS family. SPTSSA subfamily. In terms of assembly, component of the serine palmitoyltransferase (SPT) complex, which is composed of SPTLC1, SPTLC2 or SPTLC3 and SPTSSA or SPTSSB. The heterodimer consisting of SPTLC1 and SPTLC2/SPTLC3 forms the catalytic core of the enzyme, while SPTSSA or SPTSSB subunits determine substrate specificity. SPT also interacts with ORMDL proteins, especially ORMDL3, which negatively regulate SPT activity in the presence of ceramides. Interacts with MBOAT7; the interaction plays a role in MBOAT7 localization to mitochondria-associated membranes.

The protein resides in the endoplasmic reticulum membrane. Its pathway is lipid metabolism; sphingolipid metabolism. In terms of biological role, component of the serine palmitoyltransferase multisubunit enzyme (SPT) that catalyzes the initial and rate-limiting step in sphingolipid biosynthesis by condensing L-serine and activated acyl-CoA (most commonly palmitoyl-CoA) to form long-chain bases. The SPT complex is composed of SPTLC1, SPTLC2 or SPTLC3 and SPTSSA or SPTSSB. Within this complex, the heterodimer consisting of SPTLC1 and SPTLC2/SPTLC3 forms the catalytic core. Within the SPT complex, SPTSSA stimulates the catalytic activity and plays a role in substrate specificity, which depends upon the overall complex composition. The SPTLC1-SPTLC2-SPTSSA complex shows a strong preference for C16-CoA substrate, while the SPTLC1-SPTLC3-SPTSSA isozyme uses both C14-CoA and C16-CoA as substrates, with a slight preference for C14-CoA. Independently of its action as a SPT component, may be involved in MBOAT7 localization to mitochondria-associated membranes, a membrane bridge between the endoplasmic reticulum and mitochondria, may hence affect MBOAT7-catalyzed incorporation of arachidonic acid into phosphatidylinositol. The sequence is that of Serine palmitoyltransferase small subunit A from Mus musculus (Mouse).